Consider the following 342-residue polypeptide: tRNA N6-adenosine threonylcarbamoyltransferase (342 aa).

2 residues coordinate Fe cation: histidine 111 and histidine 115. Residues 133–137, aspartate 166, glycine 179, aspartate 183, and asparagine 273 each bind substrate; that span reads AVSGG. Aspartate 301 serves as a coordination point for Fe cation.

It belongs to the KAE1 / TsaD family. Requires Fe(2+) as cofactor.

The protein resides in the cytoplasm. It catalyses the reaction L-threonylcarbamoyladenylate + adenosine(37) in tRNA = N(6)-L-threonylcarbamoyladenosine(37) in tRNA + AMP + H(+). In terms of biological role, required for the formation of a threonylcarbamoyl group on adenosine at position 37 (t(6)A37) in tRNAs that read codons beginning with adenine. Is involved in the transfer of the threonylcarbamoyl moiety of threonylcarbamoyl-AMP (TC-AMP) to the N6 group of A37, together with TsaE and TsaB. TsaD likely plays a direct catalytic role in this reaction. The chain is tRNA N6-adenosine threonylcarbamoyltransferase from Syntrophotalea carbinolica (strain DSM 2380 / NBRC 103641 / GraBd1) (Pelobacter carbinolicus).